The following is a 336-amino-acid chain: Urokinase plasminogen activator surface receptor (336 aa).

An N-terminal signal peptide occupies residues 1–23; the sequence is MGHPLLLPLLLLLLHTGVPASWG. 3 consecutive UPAR/Ly6 domains span residues 24–111, 116–208, and 215–302; these read LRCM…VTFP, LECI…LSLA, and HRCY…EDIQ. 3 cysteine pairs are disulfide-bonded: C26-C47, C29-C35, and C40-C68. A glycan (N-linked (GlcNAc...) asparagine) is linked at N75. Intrachain disulfides connect C94–C99, C118–C145, C121–C128, C138–C170, C176–C193, C194–C199, C217–C245, C220–C228, C238–C264, C270–C288, and C289–C294. N195 and N223 each carry an N-linked (GlcNAc...) asparagine glycan.

Monomer. Interacts (via the UPAR/Ly6 domains) with SRPX2. Interacts with MRC2. Interacts with FAP (seprase); the interaction occurs at the cell surface of invadopodia membrane. Interacts with SORL1 (via N-terminal ectodomain); this interaction decreases PLAUR internalization. The ternary complex composed of PLAUR-PLAU-SERPINE1 also interacts with SORL1.

The protein resides in the cell membrane. It is found in the cell projection. The protein localises to the invadopodium membrane. Functionally, acts as a receptor for urokinase plasminogen activator. Plays a role in localizing and promoting plasmin formation. Mediates the proteolysis-independent signal transduction activation effects of U-PA. It is subject to negative-feedback regulation by U-PA which cleaves it into an inactive form. The chain is Urokinase plasminogen activator surface receptor (PLAUR) from Aotus trivirgatus (Three-striped night monkey).